A 100-amino-acid polypeptide reads, in one-letter code: MNLSPREKDKLLISLAAMVARLRLARGVKLNHPEAVAIISDFIVEGARDGRSVAELMQAGAEVITRAQCMDGIPEMIHDIQVEATFPDGTKLVTVHEPIR.

The protein belongs to the urease gamma subunit family. As to quaternary structure, heterotrimer of UreA (gamma), UreB (beta) and UreC (alpha) subunits. Three heterotrimers associate to form the active enzyme.

The protein localises to the cytoplasm. The catalysed reaction is urea + 2 H2O + H(+) = hydrogencarbonate + 2 NH4(+). The protein operates within nitrogen metabolism; urea degradation; CO(2) and NH(3) from urea (urease route): step 1/1. This is Urease subunit gamma from Rhodopseudomonas palustris (strain BisB18).